The following is a 376-amino-acid chain: UDP-N-acetylenolpyruvoylglucosamine reductase (376 aa).

An FAD-binding PCMH-type domain is found at 48-219 (VGGPARHLVI…LDVTMQFNLG (172 aa)). The active site involves Arg196. The active-site Proton donor is Ser274. Residue Glu368 is part of the active site.

This sequence belongs to the MurB family. FAD serves as cofactor.

Its subcellular location is the cytoplasm. The catalysed reaction is UDP-N-acetyl-alpha-D-muramate + NADP(+) = UDP-N-acetyl-3-O-(1-carboxyvinyl)-alpha-D-glucosamine + NADPH + H(+). Its pathway is cell wall biogenesis; peptidoglycan biosynthesis. Its function is as follows. Cell wall formation. The protein is UDP-N-acetylenolpyruvoylglucosamine reductase of Cutibacterium acnes (strain DSM 16379 / KPA171202) (Propionibacterium acnes).